The primary structure comprises 595 residues: 2-succinyl-5-enolpyruvyl-6-hydroxy-3-cyclohexene-1-carboxylate synthase (595 aa).

The protein belongs to the TPP enzyme family. MenD subfamily. Homodimer. The cofactor is Mg(2+). Mn(2+) serves as cofactor. Requires thiamine diphosphate as cofactor.

The enzyme catalyses isochorismate + 2-oxoglutarate + H(+) = 5-enolpyruvoyl-6-hydroxy-2-succinyl-cyclohex-3-ene-1-carboxylate + CO2. Its pathway is quinol/quinone metabolism; 1,4-dihydroxy-2-naphthoate biosynthesis; 1,4-dihydroxy-2-naphthoate from chorismate: step 2/7. The protein operates within cofactor biosynthesis; phylloquinone biosynthesis. In terms of biological role, catalyzes the thiamine diphosphate-dependent decarboxylation of 2-oxoglutarate and the subsequent addition of the resulting succinic semialdehyde-thiamine pyrophosphate anion to isochorismate to yield 2-succinyl-5-enolpyruvyl-6-hydroxy-3-cyclohexene-1-carboxylate (SEPHCHC). The polypeptide is 2-succinyl-5-enolpyruvyl-6-hydroxy-3-cyclohexene-1-carboxylate synthase (Synechocystis sp. (strain ATCC 27184 / PCC 6803 / Kazusa)).